Here is a 433-residue protein sequence, read N- to C-terminus: MEFNANRVDEANAVITATLTKDSIENNLEKVAKQAAKTMNVQGFRKGKVPVAVVKQRYADKLREDAEADGIRKILADGLKLLDIKNSDLIGEPSVTKFDKKDNGDIEVELSVACKPNIDLGDYKSLVPAVKAIEIDIKKIDDRLTEIAQSSAPLEKIARKRAVKDGDFAVIDFEGFVDGVAFDGGKAEKYPLQIGSGSFIPGFEEQVIGMKYEEQKDITVKFPESYQAKDLAGKEAVFKVTLHEIQERAKPELNDEFAQKMLPGQKDVTIDTLRDRVKEQMLAEDKAKYYRDELKPVFLETLVEKINFALPTSVIEQEINYALNNKIRTMTEEEINELKENANKVEDIRNELKEDAVNSVKATFIIDALAKAENVQVSDQEVTQVLYFEAMQMGQNPQDVIKQYQQAGYLPAIKMSMIEEKVISKLLDEKLGK.

In terms of domain architecture, PPIase FKBP-type spans 166–251; sequence GDFAVIDFEG…LHEIQERAKP (86 aa).

It belongs to the FKBP-type PPIase family. Tig subfamily.

It is found in the cytoplasm. The enzyme catalyses [protein]-peptidylproline (omega=180) = [protein]-peptidylproline (omega=0). Functionally, involved in protein export. Acts as a chaperone by maintaining the newly synthesized protein in an open conformation. Functions as a peptidyl-prolyl cis-trans isomerase. This chain is Trigger factor, found in Aliarcobacter butzleri (strain RM4018) (Arcobacter butzleri).